An 88-amino-acid polypeptide reads, in one-letter code: Sec-independent protein translocase protein TatA (88 aa).

A helical transmembrane segment spans residues 1 to 21; sequence MGSLSPWHWVVLVVVVVLLFG. A compositionally biased stretch (polar residues) spans 49 to 71; the sequence is ENQAQASALETPMQNPTVVQSQR. The interval 49–88 is disordered; sequence ENQAQASALETPMQNPTVVQSQRVVPPWSTEQDHTEARPA. Positions 79 to 88 are enriched in basic and acidic residues; it reads EQDHTEARPA.

This sequence belongs to the TatA/E family. The Tat system comprises two distinct complexes: a TatABC complex, containing multiple copies of TatA, TatB and TatC subunits, and a separate TatA complex, containing only TatA subunits. Substrates initially bind to the TatABC complex, which probably triggers association of the separate TatA complex to form the active translocon.

Its subcellular location is the cell membrane. Functionally, part of the twin-arginine translocation (Tat) system that transports large folded proteins containing a characteristic twin-arginine motif in their signal peptide across membranes. TatA could form the protein-conducting channel of the Tat system. This Mycobacterium leprae (strain TN) protein is Sec-independent protein translocase protein TatA.